Reading from the N-terminus, the 323-residue chain is Beta-ketoacyl-[acyl-carrier-protein] synthase III (323 aa).

Active-site residues include C113 and H250. Residues 251–255 form an ACP-binding region; the sequence is QANKR. N280 is an active-site residue.

It belongs to the thiolase-like superfamily. FabH family. As to quaternary structure, homodimer.

The protein localises to the cytoplasm. The catalysed reaction is malonyl-[ACP] + acetyl-CoA + H(+) = 3-oxobutanoyl-[ACP] + CO2 + CoA. It functions in the pathway lipid metabolism; fatty acid biosynthesis. Functionally, catalyzes the condensation reaction of fatty acid synthesis by the addition to an acyl acceptor of two carbons from malonyl-ACP. Catalyzes the first condensation reaction which initiates fatty acid synthesis and may therefore play a role in governing the total rate of fatty acid production. Possesses both acetoacetyl-ACP synthase and acetyl transacylase activities. Its substrate specificity determines the biosynthesis of branched-chain and/or straight-chain of fatty acids. The sequence is that of Beta-ketoacyl-[acyl-carrier-protein] synthase III from Chelativorans sp. (strain BNC1).